The following is a 2273-amino-acid chain: Retinal-specific phospholipid-transporting ATPase ABCA4 (2273 aa).

Over 1–21 the chain is Cytoplasmic; sequence MGFVRQIQLLLWKNWTLRKRQ. A helical membrane pass occupies residues 22–42; that stretch reads KIRFVVELVWPLSLFLVLIWL. Topologically, residues 43–646 are extracellular; sequence RNANPLYSHH…MPYPCFVDDS (604 aa). Intrachain disulfides connect cysteine 54-cysteine 81 and cysteine 75-cysteine 324. N-linked (GlcNAc...) asparagine glycosylation occurs at asparagine 98. Residues serine 336 and asparagine 338 each contribute to the Mg(2+) site. A disulfide bond links cysteine 370 and cysteine 519. Residues asparagine 415, asparagine 444, and asparagine 504 are each glycosylated (N-linked (GlcNAc...) asparagine). Residues arginine 587 and arginine 653 each contribute to the an N-all-trans-retinylidenephosphatidylethanolamine site. 3 cysteine pairs are disulfide-bonded: cysteine 641–cysteine 1490, cysteine 1444–cysteine 1455, and cysteine 1488–cysteine 1502. Residues 647-667 form a helical membrane-spanning segment; sequence FMIILNRCFPIFMVLAWIYSV. At 668-699 the chain is on the cytoplasmic side; it reads SMTVKSIVLEKELRLKETLKNQGVSNAVIWCT. Residues 700-720 traverse the membrane as a helical segment; it reads WFLDSFSIMSMSIFLLTIFIM. Residues 721–730 are Extracellular-facing; the sequence is HGRILHYSDP. Residues 731–751 traverse the membrane as a helical segment; it reads FILFLFLLAFSTATIMLCFLL. The Cytoplasmic portion of the chain corresponds to 752–759; it reads STFFSKAS. The helical transmembrane segment at 760 to 780 threads the bilayer; it reads LAAACSGVIYFTLYLPHILCF. Over 781–835 the chain is Extracellular; it reads AWQDRMTAELKKAVSLLSPVAFGFGTEYLVRFEEQGLGLQWSNIGNSPTEGDEFS. Residues 836 to 856 traverse the membrane as a helical segment; sequence FLLSMQMMLLDAAVYGLLAWY. Topologically, residues 857–1376 are cytoplasmic; sequence LDQVFPGDYG…IRSHKDFLAQ (520 aa). Residues 891–911 are disordered; that stretch reads ERALEKTEPLTEETEDPEHPE. The residue at position 901 (threonine 901) is a Phosphothreonine. The 232-residue stretch at 929–1160 folds into the ABC transporter 1 domain; that stretch reads VCVKNLVKIF…FGTGLYLTLV (232 aa). 3 residues coordinate ATP: phenylalanine 938, glycine 966, and lysine 969. Threonine 970 contacts Mg(2+). ATP is bound by residues threonine 971, glutamine 1010, lysine 1054, glycine 1064, glycine 1065, and histidine 1118. Serine 1185 carries the post-translational modification Phosphoserine. The interval 1284 to 1345 is disordered; that stretch reads PLFAGGAQQK…EPECPGPQLN (62 aa). Threonine 1313 is subject to Phosphothreonine. Position 1317 is a phosphoserine (serine 1317). Positions 1331 to 1340 are enriched in pro residues; the sequence is GQPPPEPECP. The chain crosses the membrane as a helical span at residues 1377–1397; the sequence is IVLPATFVFLALMLSIVIPPF. Over 1398–1727 the chain is Extracellular; sequence GEYPALTLHP…VSPTTYWVTN (330 aa). Asparagine 1469 carries N-linked (GlcNAc...) asparagine glycosylation. N-linked (GlcNAc...) asparagine glycans are attached at residues asparagine 1529, asparagine 1588, and asparagine 1662. The helical transmembrane segment at 1728–1748 threads the bilayer; the sequence is FLWDIMNYSVSAGLVVGIFIG. The Cytoplasmic portion of the chain corresponds to 1749–1759; that stretch reads FQKKAYTSPEN. A helical membrane pass occupies residues 1760 to 1780; sequence LPALVALLLLYGWAVIPMMYP. The Extracellular segment spans residues 1781 to 1792; that stretch reads ASFLFDVPSTAY. Residues 1793–1813 traverse the membrane as a helical segment; sequence VALSCANLFIGINSSAITFIL. Topologically, residues 1814–1831 are cytoplasmic; it reads ELFENNRTLLRFNAVLRK. The helical transmembrane segment at 1832 to 1852 threads the bilayer; the sequence is LLIVFPHFCLGRGLIDLALSQ. Topologically, residues 1853–1873 are extracellular; sequence AVTDVYARFGEEHSANPFHWD. The chain crosses the membrane as a helical span at residues 1874-1894; sequence LIGKNLFAMVVEGVVYFLLTL. Over 1895–2273 the chain is Cytoplasmic; the sequence is LVQRHFFLSQ…AAGASRQAQD (379 aa). The region spanning 1938 to 2170 is the ABC transporter 2 domain; it reads LRLHELTKIY…FGDGYIVTMK (233 aa). Residues asparagine 1974, glycine 1975, lysine 1978, threonine 1979, threonine 1980, and glycine 2073 each coordinate ATP. Mg(2+) is bound at residue threonine 1979. An essential for ATP binding and ATPase activity region spans residues 2244–2249; that stretch reads VFVNFA.

This sequence belongs to the ABC transporter superfamily. ABCA family. Post-translationally, proteolytic cleavage by trypsin leads to a 120-kDa N-terminal fragment and a 115-kDa C-terminal fragment that are linked through disulfide bonds. In terms of processing, N-glycosylated. Phosphorylation is independent of light exposure and modulates ATPase activity. As to expression, retinal-specific. Seems to be exclusively found in the rims of rod photoreceptor cells.

It is found in the membrane. It localises to the endoplasmic reticulum. The protein resides in the cytoplasmic vesicle. The protein localises to the cell projection. Its subcellular location is the cilium. It is found in the photoreceptor outer segment. The catalysed reaction is an N-all-trans-retinylidenephosphatidylethanolamine(out) + ATP + H2O = an N-all-trans-retinylidenephosphatidylethanolamine(in) + ADP + phosphate + H(+). The enzyme catalyses ATP + H2O + phospholipidSide 1 = ADP + phosphate + phospholipidSide 2.. It catalyses the reaction a 1,2-diacyl-sn-glycero-3-phosphoethanolamine(out) + ATP + H2O = a 1,2-diacyl-sn-glycero-3-phosphoethanolamine(in) + ADP + phosphate + H(+). It carries out the reaction N-11-cis-retinylidenephosphatidylethanolamine(out) + ATP + H2O = N-11-cis-retinylidenephosphatidylethanolamine(in) + ADP + phosphate + H(+). The catalysed reaction is ATP + H2O = ADP + phosphate + H(+). With respect to regulation, ATPase activity is decreased by cholesterol and ceramide. Phospholipids translocase activity is highly reduced by berylium fluoride and aluminum floride. N-ethylmaleimide inhibits phospholipid translocase activity. Functionally, flippase that catalyzes in an ATP-dependent manner the transport of retinal-phosphatidylethanolamine conjugates like 11-cis and all-trans isomers of N-retinylidene-phosphatidylethanolamine (N-Ret-PE) from the lumen to the cytoplasmic leaflet of photoreceptor outer segment disk membranes, where 11-cis-retinylidene-phosphatidylethanolamine is then isomerized to its all-trans isomer and reduced by RDH8 to produce all-trans-retinol. This transport activity ensures that all-trans-retinal generated from photoexcitation and 11-cis-retinal not needed for the regeneration of rhodopsin and cone opsins are effectively cleared from the photoreceptors, therefore preventing their accumulation and the formation of toxic bisretinoid. Displays ATPase activity in vitro in absence of retinal substrate. May display GTPase activity that is strongly influenced by the lipid environment and the presence of retinoid compounds. Binds the unprotonated form of N-retinylidene-phosphatidylethanolamine with high affinity in the absence of ATP, and ATP binding and hydrolysis induce a protein conformational change that causes N-retinylidene-phosphatidylethanolamine release. The chain is Retinal-specific phospholipid-transporting ATPase ABCA4 from Homo sapiens (Human).